The primary structure comprises 193 residues: Probable nicotinate-nucleotide adenylyltransferase (193 aa).

Belongs to the NadD family.

The catalysed reaction is nicotinate beta-D-ribonucleotide + ATP + H(+) = deamido-NAD(+) + diphosphate. Its pathway is cofactor biosynthesis; NAD(+) biosynthesis; deamido-NAD(+) from nicotinate D-ribonucleotide: step 1/1. In terms of biological role, catalyzes the reversible adenylation of nicotinate mononucleotide (NaMN) to nicotinic acid adenine dinucleotide (NaAD). The protein is Probable nicotinate-nucleotide adenylyltransferase of Coprothermobacter proteolyticus (strain ATCC 35245 / DSM 5265 / OCM 4 / BT).